Reading from the N-terminus, the 68-residue chain is Agnoprotein (68 aa).

Over 1 to 24 the chain is Cytoplasmic; it reads MVLRQLSRQASVKVGKTWTGTKRR. Phosphoserine; by host occurs at positions 7 and 11. Thr-21 is modified (phosphothreonine; by host). The chain crosses the membrane as a helical; Signal-anchor for type II membrane protein span at residues 25–41; that stretch reads AQRIFIFILELLLDFCR. Residues 42–68 are Extracellular-facing; the sequence is GEDSVDGKKKKDSLTDKTETVTEKKES. Residues 44–68 are disordered; sequence DSVDGKKKKDSLTDKTETVTEKKES.

It belongs to the polyomavirus agnoprotein family. As to quaternary structure, homooligomer. Interacts with VP1. Interacts with large T antigen; this interaction may impact upon the activity of T-antigen on the control of viral gene transcription and replication. Interacts with small t antigen. Interacts with host CBX5; this interaction induces the dissociation of CBX5 from LBR, resulting in destabilization of the nuclear envelope. Post-translationally, phosphorylated by host PKC. Phosphorylation alters the stability and may also have an impact on the subcellular location.

It is found in the host cytoplasm. It localises to the host nucleus membrane. The protein resides in the host rough endoplasmic reticulum membrane. The protein localises to the host cell membrane. In terms of biological role, alters the structure of the nuclear envelope by interacting with host CBX5 and disrupting CBX5 association with LBR. Involved in the perinuclear-nuclear localization of the capsid protein VP1 during virion assembly and maturation. Plays an important role in the release of progeny virions from infected cells and in viral propagation, probably by acting as a viral ionic channel in the host plasma membrane. Allows influx of extracellular calcium ions in the host cell. May contribute to viral genome transcription and translation of viral late proteins. This chain is Agnoprotein, found in Simian virus 12 (strain wt100) (SV-12).